The sequence spans 345 residues: Nicotinate-nucleotide--dimethylbenzimidazole phosphoribosyltransferase (345 aa).

Residue Glu311 is the Proton acceptor of the active site.

This sequence belongs to the CobT family.

The enzyme catalyses 5,6-dimethylbenzimidazole + nicotinate beta-D-ribonucleotide = alpha-ribazole 5'-phosphate + nicotinate + H(+). It participates in nucleoside biosynthesis; alpha-ribazole biosynthesis; alpha-ribazole from 5,6-dimethylbenzimidazole: step 1/2. Catalyzes the synthesis of alpha-ribazole-5'-phosphate from nicotinate mononucleotide (NAMN) and 5,6-dimethylbenzimidazole (DMB). In Janthinobacterium sp. (strain Marseille) (Minibacterium massiliensis), this protein is Nicotinate-nucleotide--dimethylbenzimidazole phosphoribosyltransferase.